Consider the following 362-residue polypeptide: uncharacterized protein (362 aa).

Residues 13–33 traverse the membrane as a helical segment; sequence VLILSVGLNMLFLLLFYSAIF. Residues 314-357 enclose the LysM domain; that stretch reads EEYVVQDGDSLWLIAKRFGIPMDKIIQKNGLNHHRLFPGKVLKL.

The protein belongs to the chlamydial CPn_0593/CT_474/TC_0759 family.

It localises to the membrane. This is an uncharacterized protein from Chlamydia pneumoniae (Chlamydophila pneumoniae).